The primary structure comprises 245 residues: MAEPKYKRVLIKLSGEALAGEKGVGIDLPTVQAIAKEIAEVADSGIQIALVIGGGNLWRGEPAAEAGMDRVQADYTGMLGTTMNALVMADSLKQLGVDTRVQTAIDMKSVAEPYIRGRALRHFEKGRIVIFAAGIGSPYFSTDTTAALRAAEIESDAILMAKNGVDGVYNDDPRKNADAVKFDKLTHVEVIKRGLKIIDATASTLSMDNDIDLVVFNMNEPGNIKRVIFGEQIGTTVSNKAELRK.

An ATP-binding site is contributed by 12-15; sequence KLSG. The interval 20-25 is involved in allosteric activation by GTP; sequence GEKGVG. G54 provides a ligand contact to UMP. ATP contacts are provided by G55 and R59. UMP contacts are provided by residues D74 and 135-142; that span reads IGSPYFST. ATP-binding residues include N163, Y169, and D172.

It belongs to the UMP kinase family. In terms of assembly, homohexamer.

It localises to the cytoplasm. The enzyme catalyses UMP + ATP = UDP + ADP. It functions in the pathway pyrimidine metabolism; CTP biosynthesis via de novo pathway; UDP from UMP (UMPK route): step 1/1. Allosterically activated by GTP. Inhibited by UTP. Its function is as follows. Catalyzes the reversible phosphorylation of UMP to UDP. This Streptococcus thermophilus (strain ATCC BAA-250 / LMG 18311) protein is Uridylate kinase.